Reading from the N-terminus, the 167-residue chain is NAD(P)H-quinone oxidoreductase subunit J (167 aa).

This sequence belongs to the complex I 30 kDa subunit family. NDH-1 can be composed of about 15 different subunits; different subcomplexes with different compositions have been identified which probably have different functions.

The protein resides in the cellular thylakoid membrane. It carries out the reaction a plastoquinone + NADH + (n+1) H(+)(in) = a plastoquinol + NAD(+) + n H(+)(out). The catalysed reaction is a plastoquinone + NADPH + (n+1) H(+)(in) = a plastoquinol + NADP(+) + n H(+)(out). Functionally, NDH-1 shuttles electrons from an unknown electron donor, via FMN and iron-sulfur (Fe-S) centers, to quinones in the respiratory and/or the photosynthetic chain. The immediate electron acceptor for the enzyme in this species is believed to be plastoquinone. Couples the redox reaction to proton translocation, and thus conserves the redox energy in a proton gradient. Cyanobacterial NDH-1 also plays a role in inorganic carbon-concentration. This Microcystis aeruginosa (strain NIES-843 / IAM M-2473) protein is NAD(P)H-quinone oxidoreductase subunit J.